A 205-amino-acid polypeptide reads, in one-letter code: CD83 antigen (205 aa).

The signal sequence occupies residues 1-19 (MSRGLQLLLLSCAYSLAPA). An Ig-like V-type domain is found at 20 to 114 (TPEVKVACSE…YRCTLQDPDG (95 aa)). The Extracellular portion of the chain corresponds to 20–144 (TPEVKVACSE…EETFKKYRAE (125 aa)). The cysteines at positions 35 and 107 are disulfide-linked. Over residues 60-69 (METPQEDHLR) the composition is skewed to basic and acidic residues. The segment at 60 to 81 (METPQEDHLRGQHYHQKGQNGS) is disordered. N-linked (GlcNAc...) asparagine glycans are attached at residues Asn79, Asn96, and Asn117. The helical transmembrane segment at 145-166 (IVLLLALVIFYLTLIIFTCKFA) threads the bilayer. Topologically, residues 167–205 (RLQSIFPDFSKAGMERAFLPVTSPNKHLGLVTPHKTELV) are cytoplasmic.

As to quaternary structure, monomer. Homodimer. Homotrimer. Interacts with MARCHF1; this interaction antagonizes MARCHF1-mediated MHC II and CD86 down-regulation. Post-translationally, glycosylated when expressed on activated dendritic cells. As to expression, expressed by activated lymphocytes, Langerhans cells and activatd dendritic cells.

Its subcellular location is the membrane. Functionally, transmembrane glycoprotein predominantly found on the surface of many immune cells including dendritic cells or lymphocytes that plays various roles in immune response regulation. Plays an essential role in CD4(+) T-selection, differentiation and stability by regulating the activity of the major E3 ubiquitin ligase responsible for controlling MHCII trafficking MARCHF8. Also inhibits MARCHF1 association with MHCII or CD86 to prevent their ubiquitination and subsequent degradation. In addition, acts as an important modulator of protective responses against acute infections. The sequence is that of CD83 antigen (CD83) from Homo sapiens (Human).